The following is a 1019-amino-acid chain: Macrophage colony-stimulating factor 1 receptor 2 (1019 aa).

The signal sequence occupies residues 1-18 (MKSYCLLLSITLSCCCSA). At 19 to 576 (EDLPDPPSIH…LREHNSAFMS (558 aa)) the chain is on the extracellular side. Ig-like C2-type domains follow at residues 37-109 (QAEA…IHLY), 106-212 (IHLY…LLVA), and 224-312 (QNKA…LIVL). A disulfide bridge links Cys-52 with Cys-92. N-linked (GlcNAc...) asparagine glycans are attached at residues Asn-96, Asn-148, Asn-169, Asn-249, Asn-342, Asn-346, Asn-355, Asn-369, Asn-379, Asn-408, Asn-422, Asn-429, Asn-433, and Asn-514. Intrachain disulfides connect Cys-139/Cys-193 and Cys-239/Cys-294. 2 consecutive Ig-like C2-type domains span residues 383 to 474 (STTV…LRIY) and 487 to 567 (TLTC…VFHL). Cys-490 and Cys-552 are disulfide-bonded. Residues 577–597 (ALIGAGSTAAILFLLLLVVFY) form a helical membrane-spanning segment. The Cytoplasmic segment spans residues 598–1019 (KWRQKPKYEI…LSVTNIYQLS (422 aa)). The tract at residues 601–633 (QKPKYEIRWKIIESTEGNHYTFVDPTLLPYNYK) is regulatory juxtamembrane domain. Tyr-620 bears the Phosphotyrosine; by autocatalysis mark. A Protein kinase domain is found at 641 to 963 (LRLGAVLGSG…MICQLIDRLL (323 aa)). ATP is bound by residues 647-655 (LGSGAFGKV) and Lys-674. A phosphotyrosine; by autocatalysis mark is found at Tyr-756 and Tyr-778. Catalysis depends on Asp-827, which acts as the Proton acceptor. The activation loop stretch occupies residues 845 to 867 (DFGLARDIQNDDSYIVQGNARLP). 2 positions are modified to phosphotyrosine; by autocatalysis: Tyr-858 and Tyr-974. The interval 970–1001 (NHQSYSNINETKKDDFKGGKSQRRGEEEEQRR) is disordered. Residues 979 to 1001 (ETKKDDFKGGKSQRRGEEEEQRR) are compositionally biased toward basic and acidic residues. Tyr-1016 carries the phosphotyrosine; by autocatalysis modification.

Belongs to the protein kinase superfamily. Tyr protein kinase family. CSF-1/PDGF receptor subfamily. In terms of assembly, monomer. Homodimer. Interacts with CSF1. Autophosphorylated in response to CSF1 binding. autophosphorylation, leading to its degradation. Post-translationally, ubiquitinated. Becomes rapidly polyubiquitinated after autophosphorylation, leading to its degradation.

Its subcellular location is the cell membrane. It carries out the reaction L-tyrosyl-[protein] + ATP = O-phospho-L-tyrosyl-[protein] + ADP + H(+). With respect to regulation, present in an inactive conformation in the absence of bound ligand. CSF1 binding leads to dimerization and activation by autophosphorylation on tyrosine residues. Its function is as follows. Tyrosine-protein kinase that acts as a cell-surface receptor for CSF1 and plays an essential role in the regulation of survival, proliferation and differentiation of hematopoietic precursor cells, especially mononuclear phagocytes, such as macrophages and monocytes. Plays an important role in innate immunity and in inflammatory processes. Plays an important role in the regulation of osteoclast proliferation and differentiation, the regulation of bone resorption, and is required for normal bone development. Promotes reorganization of the actin cytoskeleton, regulates formation of membrane ruffles, cell adhesion and cell migration. Activates several signaling pathways in response to ligand binding. The protein is Macrophage colony-stimulating factor 1 receptor 2 (csf1r2) of Takifugu rubripes (Japanese pufferfish).